The primary structure comprises 132 residues: Sec-independent protein translocase protein TatB (132 aa).

The helical transmembrane segment at 2–22 (FDGIGFMELLLIGILGLVVLG) threads the bilayer. The interval 86–132 (LKSAAQSVNRPYKVEDISPASSSAPVDPAPTETKTAETSANSEKPNG) is disordered. Residues 103–115 (SPASSSAPVDPAP) are compositionally biased toward low complexity. A compositionally biased stretch (polar residues) spans 117–132 (ETKTAETSANSEKPNG).

This sequence belongs to the TatB family. As to quaternary structure, the Tat system comprises two distinct complexes: a TatABC complex, containing multiple copies of TatA, TatB and TatC subunits, and a separate TatA complex, containing only TatA subunits. Substrates initially bind to the TatABC complex, which probably triggers association of the separate TatA complex to form the active translocon.

Its subcellular location is the cell inner membrane. Part of the twin-arginine translocation (Tat) system that transports large folded proteins containing a characteristic twin-arginine motif in their signal peptide across membranes. Together with TatC, TatB is part of a receptor directly interacting with Tat signal peptides. TatB may form an oligomeric binding site that transiently accommodates folded Tat precursor proteins before their translocation. The protein is Sec-independent protein translocase protein TatB of Shewanella sediminis (strain HAW-EB3).